We begin with the raw amino-acid sequence, 243 residues long: Mesoderm posterior protein 1 (243 aa).

A disordered region spans residues 1–86 (MAQPLCEPRS…QRQSASEREK (86 aa)). Over residues 27 to 36 (DGNSVCSPAW) the composition is skewed to polar residues. Residues 76–130 (GQRQSASEREKLRMRTLARALHELRRFLPPSVAPTGQNLTKIETLRLAIRYIGHL) form the bHLH domain. The short motif at 153–157 (CPLCP) is the CPLCP element. A disordered region spans residues 204–228 (AETASQERQEMEPSPSSPLFSSDML).

As to expression, no expression was detected in adult tissues except the testis. Expression in the testis was regulated developmentally; expressed 2 weeks after birth, and increases, reaching the full expression level in mature testes.

The protein localises to the nucleus. Transcription factor. Plays a role in the epithelialization of somitic mesoderm and in the development of cardiac mesoderm. Defines the rostrocaudal patterning of the somites by participating in distinct Notch pathways. The sequence is that of Mesoderm posterior protein 1 (Mesp1) from Mus musculus (Mouse).